A 260-amino-acid chain; its full sequence is Malonyl-[acyl-carrier protein] O-methyltransferase (260 aa).

This sequence belongs to the methyltransferase superfamily.

It carries out the reaction malonyl-[ACP] + S-adenosyl-L-methionine = malonyl-[ACP] methyl ester + S-adenosyl-L-homocysteine. It functions in the pathway cofactor biosynthesis; biotin biosynthesis. Its function is as follows. Converts the free carboxyl group of a malonyl-thioester to its methyl ester by transfer of a methyl group from S-adenosyl-L-methionine (SAM). It allows to synthesize pimeloyl-ACP via the fatty acid synthetic pathway. The protein is Malonyl-[acyl-carrier protein] O-methyltransferase of Chlorobium phaeovibrioides (strain DSM 265 / 1930) (Prosthecochloris vibrioformis (strain DSM 265)).